We begin with the raw amino-acid sequence, 294 residues long: 1D-myo-inositol 2-acetamido-2-deoxy-alpha-D-glucopyranoside deacetylase (294 aa).

Positions 13, 16, and 148 each coordinate Zn(2+).

It belongs to the MshB deacetylase family. The cofactor is Zn(2+).

The catalysed reaction is 1D-myo-inositol 2-acetamido-2-deoxy-alpha-D-glucopyranoside + H2O = 1D-myo-inositol 2-amino-2-deoxy-alpha-D-glucopyranoside + acetate. Its function is as follows. Catalyzes the deacetylation of 1D-myo-inositol 2-acetamido-2-deoxy-alpha-D-glucopyranoside (GlcNAc-Ins) in the mycothiol biosynthesis pathway. This Geodermatophilus obscurus (strain ATCC 25078 / DSM 43160 / JCM 3152 / CCUG 61914 / KCC A-0152 / KCTC 9177 / NBRC 13315 / NRRL B-3577 / G-20) protein is 1D-myo-inositol 2-acetamido-2-deoxy-alpha-D-glucopyranoside deacetylase.